We begin with the raw amino-acid sequence, 194 residues long: Imidazoleglycerol-phosphate dehydratase (194 aa).

Belongs to the imidazoleglycerol-phosphate dehydratase family.

The protein resides in the cytoplasm. The catalysed reaction is D-erythro-1-(imidazol-4-yl)glycerol 3-phosphate = 3-(imidazol-4-yl)-2-oxopropyl phosphate + H2O. It functions in the pathway amino-acid biosynthesis; L-histidine biosynthesis; L-histidine from 5-phospho-alpha-D-ribose 1-diphosphate: step 6/9. In Streptococcus gordonii (strain Challis / ATCC 35105 / BCRC 15272 / CH1 / DL1 / V288), this protein is Imidazoleglycerol-phosphate dehydratase.